The chain runs to 382 residues: 1-deoxy-D-xylulose 5-phosphate reductoisomerase (382 aa).

NADPH is bound by residues Thr10, Gly11, Ser12, Ile13, Gly36, Lys37, Asn38, and Asn121. Lys122 is a binding site for 1-deoxy-D-xylulose 5-phosphate. Glu123 is an NADPH binding site. Residue Asp147 participates in Mn(2+) binding. Ser148, Glu149, Ser173, and His196 together coordinate 1-deoxy-D-xylulose 5-phosphate. Mn(2+) is bound at residue Glu149. Residue Gly202 coordinates NADPH. 1-deoxy-D-xylulose 5-phosphate-binding residues include Ser209, Asn214, Lys215, and Glu218. Residue Glu218 coordinates Mn(2+).

The protein belongs to the DXR family. Mg(2+) serves as cofactor. Requires Mn(2+) as cofactor.

The enzyme catalyses 2-C-methyl-D-erythritol 4-phosphate + NADP(+) = 1-deoxy-D-xylulose 5-phosphate + NADPH + H(+). It participates in isoprenoid biosynthesis; isopentenyl diphosphate biosynthesis via DXP pathway; isopentenyl diphosphate from 1-deoxy-D-xylulose 5-phosphate: step 1/6. Functionally, catalyzes the NADPH-dependent rearrangement and reduction of 1-deoxy-D-xylulose-5-phosphate (DXP) to 2-C-methyl-D-erythritol 4-phosphate (MEP). The polypeptide is 1-deoxy-D-xylulose 5-phosphate reductoisomerase (Halalkalibacterium halodurans (strain ATCC BAA-125 / DSM 18197 / FERM 7344 / JCM 9153 / C-125) (Bacillus halodurans)).